Consider the following 121-residue polypeptide: Putative iron-sulfur cluster insertion protein ErpA (121 aa).

Iron-sulfur cluster is bound by residues cysteine 49, cysteine 113, and cysteine 115.

Belongs to the HesB/IscA family. In terms of assembly, homodimer. It depends on iron-sulfur cluster as a cofactor.

Required for insertion of 4Fe-4S clusters. The protein is Putative iron-sulfur cluster insertion protein ErpA of Paraburkholderia phymatum (strain DSM 17167 / CIP 108236 / LMG 21445 / STM815) (Burkholderia phymatum).